Reading from the N-terminus, the 276-residue chain is RNA-binding protein pno-1 (276 aa).

Disordered stretches follow at residues 1-30 and 62-101; these read MATS…VPST and DVVM…SRVV. Residues 8 to 27 are compositionally biased toward acidic residues; that stretch reads FDDEFPMEEGMPELLDDEDV. One can recognise a KH domain in the interval 197–249; sequence GDHVSRAIGRIAGKDGRTKLVIENTTKTRIVVANTKIHILGAYQNLKLARNAV.

This sequence belongs to the PNO1 family. Part of the small subunit (SSU) processome, composed of more than 70 proteins and the RNA chaperone small nucleolar RNA (snoRNA) U3.

Its subcellular location is the nucleus. It localises to the nucleolus. Functionally, part of the small subunit (SSU) processome, first precursor of the small eukaryotic ribosomal subunit. During the assembly of the SSU processome in the nucleolus, many ribosome biogenesis factors, an RNA chaperone and ribosomal proteins associate with the nascent pre-rRNA and work in concert to generate RNA folding, modifications, rearrangements and cleavage as well as targeted degradation of pre-ribosomal RNA by the RNA exosome. Positively regulates dimethylation of two adjacent adenosines in the loop of a conserved hairpin near the 3'-end of 18S rRNA. In Caenorhabditis briggsae, this protein is RNA-binding protein pno-1.